The primary structure comprises 255 residues: Putative glycyl-radical enzyme activating enzyme MJ1632 (255 aa).

One can recognise a Radical SAM core domain in the interval S30 to K245. [4Fe-4S] cluster contacts are provided by C45, C49, and C52. Residues Y51–F53, G88, and D134–K136 contribute to the S-adenosyl-L-methionine site.

Belongs to the organic radical-activating enzymes family. The cofactor is [4Fe-4S] cluster.

It catalyses the reaction glycyl-[protein] + reduced [flavodoxin] + S-adenosyl-L-methionine = glycin-2-yl radical-[protein] + semiquinone [flavodoxin] + 5'-deoxyadenosine + L-methionine + H(+). The protein is Putative glycyl-radical enzyme activating enzyme MJ1632 of Methanocaldococcus jannaschii (strain ATCC 43067 / DSM 2661 / JAL-1 / JCM 10045 / NBRC 100440) (Methanococcus jannaschii).